The primary structure comprises 272 residues: 2-succinyl-6-hydroxy-2,4-cyclohexadiene-1-carboxylate synthase (272 aa).

It belongs to the AB hydrolase superfamily. MenH family. As to quaternary structure, monomer.

It carries out the reaction 5-enolpyruvoyl-6-hydroxy-2-succinyl-cyclohex-3-ene-1-carboxylate = (1R,6R)-6-hydroxy-2-succinyl-cyclohexa-2,4-diene-1-carboxylate + pyruvate. It functions in the pathway quinol/quinone metabolism; 1,4-dihydroxy-2-naphthoate biosynthesis; 1,4-dihydroxy-2-naphthoate from chorismate: step 3/7. The protein operates within quinol/quinone metabolism; menaquinone biosynthesis. In terms of biological role, catalyzes a proton abstraction reaction that results in 2,5-elimination of pyruvate from 2-succinyl-5-enolpyruvyl-6-hydroxy-3-cyclohexene-1-carboxylate (SEPHCHC) and the formation of 2-succinyl-6-hydroxy-2,4-cyclohexadiene-1-carboxylate (SHCHC). The polypeptide is 2-succinyl-6-hydroxy-2,4-cyclohexadiene-1-carboxylate synthase (Yersinia pestis bv. Antiqua (strain Nepal516)).